Reading from the N-terminus, the 157-residue chain is Transcriptional repressor NrdR (157 aa).

Residues 3-34 fold into a zinc finger; that stretch reads CPFCGFADTRVIDSRLGKEGNNIRRRRECSQC. Residues 49-139 form the ATP-cone domain; sequence PLIIKKDARR…VYRQFKDINE (91 aa).

Belongs to the NrdR family. Zn(2+) is required as a cofactor.

Its function is as follows. Negatively regulates transcription of bacterial ribonucleotide reductase nrd genes and operons by binding to NrdR-boxes. The chain is Transcriptional repressor NrdR from Syntrophotalea carbinolica (strain DSM 2380 / NBRC 103641 / GraBd1) (Pelobacter carbinolicus).